A 159-amino-acid chain; its full sequence is Ribosomal RNA large subunit methyltransferase H (159 aa).

Residues leucine 76 and glycine 108 each coordinate S-adenosyl-L-methionine.

Belongs to the RNA methyltransferase RlmH family. In terms of assembly, homodimer.

The protein localises to the cytoplasm. It catalyses the reaction pseudouridine(1915) in 23S rRNA + S-adenosyl-L-methionine = N(3)-methylpseudouridine(1915) in 23S rRNA + S-adenosyl-L-homocysteine + H(+). Specifically methylates the pseudouridine at position 1915 (m3Psi1915) in 23S rRNA. This Ligilactobacillus salivarius (strain UCC118) (Lactobacillus salivarius) protein is Ribosomal RNA large subunit methyltransferase H.